A 261-amino-acid chain; its full sequence is Triosephosphate isomerase (261 aa).

Residue 10–12 participates in substrate binding; that stretch reads NWK. The active-site Electrophile is the His-100. Glu-172 serves as the catalytic Proton acceptor. Substrate is bound by residues Gly-178, Ser-218, and 239–240; that span reads GG.

This sequence belongs to the triosephosphate isomerase family. In terms of assembly, homodimer.

The protein localises to the cytoplasm. It catalyses the reaction D-glyceraldehyde 3-phosphate = dihydroxyacetone phosphate. The protein operates within carbohydrate biosynthesis; gluconeogenesis. It functions in the pathway carbohydrate degradation; glycolysis; D-glyceraldehyde 3-phosphate from glycerone phosphate: step 1/1. Involved in the gluconeogenesis. Catalyzes stereospecifically the conversion of dihydroxyacetone phosphate (DHAP) to D-glyceraldehyde-3-phosphate (G3P). The protein is Triosephosphate isomerase of Mycolicibacterium vanbaalenii (strain DSM 7251 / JCM 13017 / BCRC 16820 / KCTC 9966 / NRRL B-24157 / PYR-1) (Mycobacterium vanbaalenii).